Consider the following 132-residue polypeptide: Small ribosomal subunit protein uS11 (132 aa).

The protein belongs to the universal ribosomal protein uS11 family. Part of the 30S ribosomal subunit.

Functionally, located on the platform of the 30S subunit. The chain is Small ribosomal subunit protein uS11 (rps11) from Korarchaeum cryptofilum (strain OPF8).